We begin with the raw amino-acid sequence, 428 residues long: Histidinol dehydrogenase (428 aa).

Tyr126, Gln188, and Asn211 together coordinate NAD(+). Substrate contacts are provided by Ser234, Gln256, and His259. 2 residues coordinate Zn(2+): Gln256 and His259. Catalysis depends on proton acceptor residues Glu324 and His325. His325, Asp358, Glu412, and His417 together coordinate substrate. Position 358 (Asp358) interacts with Zn(2+). His417 provides a ligand contact to Zn(2+).

This sequence belongs to the histidinol dehydrogenase family. Zn(2+) serves as cofactor.

It carries out the reaction L-histidinol + 2 NAD(+) + H2O = L-histidine + 2 NADH + 3 H(+). The protein operates within amino-acid biosynthesis; L-histidine biosynthesis; L-histidine from 5-phospho-alpha-D-ribose 1-diphosphate: step 9/9. Functionally, catalyzes the sequential NAD-dependent oxidations of L-histidinol to L-histidinaldehyde and then to L-histidine. This Chlorobaculum tepidum (strain ATCC 49652 / DSM 12025 / NBRC 103806 / TLS) (Chlorobium tepidum) protein is Histidinol dehydrogenase.